We begin with the raw amino-acid sequence, 304 residues long: ULP1-interacting protein 4 (304 aa).

A disordered region spans residues 72 to 269; it reads DEYPKEVDEH…SIVKEGDANT (198 aa). Positions 73-83 are enriched in basic and acidic residues; the sequence is EYPKEVDEHSN. Polar residues predominate over residues 129 to 149; the sequence is TPSLKGNVTFPSPKTAISQDG. S140 is subject to Phosphoserine. A compositionally biased stretch (basic and acidic residues) spans 155-183; the sequence is ETTRKERKYEHAPLNEVPVERDPKEENKE. Residues S185 and S205 each carry the phosphoserine modification.

Interacts with ULP1.

The protein resides in the endoplasmic reticulum membrane. The protein localises to the mitochondrion outer membrane. It is found in the nucleus envelope. This chain is ULP1-interacting protein 4 (UIP4), found in Saccharomyces cerevisiae (strain ATCC 204508 / S288c) (Baker's yeast).